A 537-amino-acid polypeptide reads, in one-letter code: uncharacterized protein (537 aa).

Disordered regions lie at residues 1-33, 71-98, 197-220, and 516-537; these read MEPG…ILAF, SSPP…RKRQ, SHNN…SEEK, and GRQR…EEQN. S72 is subject to Phosphoserine. The span at 88-98 shows a compositional bias: basic and acidic residues; that stretch reads SRVDSEARKRQ. Residues 197-214 are compositionally biased toward polar residues; it reads SHNNMASSNTQSNTQLSE. Basic residues predominate over residues 516–529; that stretch reads GRQRSSRYKSHVHK.

The protein belongs to the NAD kinase family.

This is an uncharacterized protein from Schizosaccharomyces pombe (strain 972 / ATCC 24843) (Fission yeast).